The chain runs to 784 residues: LPS-assembly protein LptD (784 aa).

An N-terminal signal peptide occupies residues 1 to 24 (MKKRIPTLLATMIASALYSHQGLA). 2 disulfide bridges follow: Cys31-Cys724 and Cys173-Cys725.

This sequence belongs to the LptD family. In terms of assembly, component of the lipopolysaccharide transport and assembly complex. Interacts with LptE and LptA. Contains two intramolecular disulfide bonds.

The protein localises to the cell outer membrane. Together with LptE, is involved in the assembly of lipopolysaccharide (LPS) at the surface of the outer membrane. The protein is LPS-assembly protein LptD of Salmonella typhi.